We begin with the raw amino-acid sequence, 349 residues long: N-acetyltaurine hydrolase (349 aa).

H26, H28, E169, H201, H230, and D298 together coordinate a divalent metal cation.

This sequence belongs to the metallo-dependent hydrolases superfamily. Phosphotriesterase family. It depends on a divalent metal cation as a cofactor. Expressed primarily in proximal tubules of the kidney.

It is found in the cytoplasm. Its subcellular location is the cytosol. The enzyme catalyses N-acetyltaurine + H2O = taurine + acetate. The catalysed reaction is N-propanoyltaurine + H2O = propanoate + taurine. It catalyses the reaction N-acetyl-L-methionine + H2O = L-methionine + acetate. It carries out the reaction N-acetyl-L-isoleucine + H2O = L-isoleucine + acetate. The enzyme catalyses N-acetyl-L-leucine + H2O = L-leucine + acetate. The catalysed reaction is N-acetyl-L-valine + H2O = L-valine + acetate. N-acetyltaurine hydrolase that regulates feeding by catalyzing the hydrolysis of N-acetyltaurine into taurine and acetate. N-acetyltaurine has anorexigenic and anti-obesity effects that are dependent on GFRAL receptor and GDF15. PTER also acts on other N-acetyl amino acids (Met, Ile, Leu, Val) and N-propionyltaurine, but at lower rates. Binds resiniferotoxin, a vanilloid that desensitizes nociceptive neurons. This Rattus norvegicus (Rat) protein is N-acetyltaurine hydrolase.